Reading from the N-terminus, the 120-residue chain is Nitrogen regulatory protein GlnK3 (120 aa).

ADP is bound by residues T40 and 48-50 (GEQ). ATP is bound by residues T40 and 48–50 (GEQ). Residues 48 to 52 (GEQKG) and K69 contribute to the 2-oxoglutarate site. ADP-binding positions include V75 and 98-101 (GDGR). Residues V75 and 98–101 (GDGR) each bind ATP. G98 is a binding site for 2-oxoglutarate.

The protein belongs to the P(II) protein family. In terms of assembly, homotrimer. Interacts and forms a complex with Amt3.

It localises to the cytoplasm. Activity is influenced by intracellular pools of the effector molecules ATP, ADP and 2-oxoglutarate. It senses the cellular nitrogen status through 2-oxoglutarate, and the energy level of the cell by binding both ATP and ADP with different affinities. ATP and 2-oxoglutarate prohibit binding to Amt3. ADP promotes the complex formation. Its function is as follows. Involved in the regulation of nitrogen metabolism. Regulates the activity of its targets by protein-protein interaction in response to the nitrogen status of the cell. Regulates the activity of the ammonia channel Amt3 via direct interaction. The sequence is that of Nitrogen regulatory protein GlnK3 from Archaeoglobus fulgidus (strain ATCC 49558 / DSM 4304 / JCM 9628 / NBRC 100126 / VC-16).